Here is a 567-residue protein sequence, read N- to C-terminus: 2-succinyl-5-enolpyruvyl-6-hydroxy-3-cyclohexene-1-carboxylate synthase (567 aa).

It belongs to the TPP enzyme family. MenD subfamily. Homodimer. It depends on Mg(2+) as a cofactor. Mn(2+) is required as a cofactor. Thiamine diphosphate serves as cofactor.

It catalyses the reaction isochorismate + 2-oxoglutarate + H(+) = 5-enolpyruvoyl-6-hydroxy-2-succinyl-cyclohex-3-ene-1-carboxylate + CO2. It functions in the pathway quinol/quinone metabolism; 1,4-dihydroxy-2-naphthoate biosynthesis; 1,4-dihydroxy-2-naphthoate from chorismate: step 2/7. Its pathway is quinol/quinone metabolism; menaquinone biosynthesis. Functionally, catalyzes the thiamine diphosphate-dependent decarboxylation of 2-oxoglutarate and the subsequent addition of the resulting succinic semialdehyde-thiamine pyrophosphate anion to isochorismate to yield 2-succinyl-5-enolpyruvyl-6-hydroxy-3-cyclohexene-1-carboxylate (SEPHCHC). The polypeptide is 2-succinyl-5-enolpyruvyl-6-hydroxy-3-cyclohexene-1-carboxylate synthase (Yersinia pestis bv. Antiqua (strain Angola)).